The following is a 368-amino-acid chain: Histidinol-phosphate aminotransferase (368 aa).

An N6-(pyridoxal phosphate)lysine modification is found at Lys-215.

The protein belongs to the class-II pyridoxal-phosphate-dependent aminotransferase family. Histidinol-phosphate aminotransferase subfamily. As to quaternary structure, homodimer. Pyridoxal 5'-phosphate serves as cofactor.

The catalysed reaction is L-histidinol phosphate + 2-oxoglutarate = 3-(imidazol-4-yl)-2-oxopropyl phosphate + L-glutamate. The protein operates within amino-acid biosynthesis; L-histidine biosynthesis; L-histidine from 5-phospho-alpha-D-ribose 1-diphosphate: step 7/9. The chain is Histidinol-phosphate aminotransferase from Buchnera aphidicola subsp. Acyrthosiphon pisum (strain 5A).